We begin with the raw amino-acid sequence, 279 residues long: uncharacterized protein (279 aa).

An N-terminal signal peptide occupies residues 1–31; it reads MLVQSRTLVTAILSCSLVFGTTVNGASVAIA.

This is an uncharacterized protein from Corynebacterium glutamicum (strain ATCC 13032 / DSM 20300 / JCM 1318 / BCRC 11384 / CCUG 27702 / LMG 3730 / NBRC 12168 / NCIMB 10025 / NRRL B-2784 / 534).